The sequence spans 421 residues: MEFPFDVDALFPERITVLDQHLRPPARRPGTTTPARVDLQQQIMTIVDELGKASAKAQHLPAPITSALRMQSNRHVIYVLKDTSARPAGKGAIIGFLKVGYKKLFVLDDREAHNEVEPLCILDFYIHESVQRHGHGRELFQYMLQKERVEPHQLAIDRPSPKLLKFLNKHYNLETTVPQVNNFVIFEGFFAHQHRSPTPSLRATRHSRAAVVDPIPAAPARKLPPKRAEGDIKPYSSSDREFLKVAVEPPWPLNRAPRRATPPAHPPPRSSSLGNSPDRGPLRPFVPEQELLRSLRLCPPHPTARLLLATDPGGSPAQRRRTRETPWGLVAQSCHYSRHGGFNTSFLGTGNQERKQGEQEAEDRSASEDQVLLQDGSGEEPTHTVAPRAQAPPAQSWMVGGDILNARVIRNLQERRNTRPW.

One can recognise an N-acetyltransferase domain in the interval 1-190 (MEFPFDVDAL…NNFVIFEGFF (190 aa)). N6-acetyllysine; by autocatalysis is present on Lys56. Residue 124-137 (FYIHESVQRHGHGR) coordinates acetyl-CoA. An N6-acetyllysine; by autocatalysis modification is found at Lys146. Residue 160–169 (SPKLLKFLNK) coordinates acetyl-CoA. A disordered region spans residues 214-235 (PIPAAPARKLPPKRAEGDIKPY). Over residues 226-235 (KRAEGDIKPY) the composition is skewed to basic and acidic residues. N6-acetyllysine; by autocatalysis is present on residues Lys233 and Lys244. The interval 252 to 284 (PLNRAPRRATPPAHPPPRSSSLGNSPDRGPLRP) is disordered. Phosphoserine occurs at positions 272 and 276. Arg305 is modified (asymmetric dimethylarginine). Position 315 is a phosphoserine (Ser315). Arg323 carries the post-translational modification Omega-N-methylarginine. Polar residues predominate over residues 342–351 (FNTSFLGTGN). Residues 342 to 398 (FNTSFLGTGNQERKQGEQEAEDRSASEDQVLLQDGSGEEPTHTVAPRAQAPPAQSWM) form a disordered region. The segment covering 352–367 (QERKQGEQEAEDRSAS) has biased composition (basic and acidic residues).

The protein belongs to the acetyltransferase ATAT1 family. In terms of assembly, component of the BBSome complex. Interacts with AP2 alpha-adaptins, including AP2A2, but not with AP1 gamma-adaptin (AP1G1/AP1G2); this interaction is required for efficient alpha-tubulin acetylation, hence clathrin-coated pits are sites of microtubule acetylation. In terms of processing, autoacetylation strongly increases tubulin acetylation.

It localises to the cytoplasm. It is found in the membrane. The protein localises to the clathrin-coated pit. Its subcellular location is the cell junction. The protein resides in the focal adhesion. It localises to the cell projection. It is found in the axon. The protein localises to the cytoskeleton. Its subcellular location is the spindle. The enzyme catalyses L-lysyl-[alpha-tubulin] + acetyl-CoA = N(6)-acetyl-L-lysyl-[alpha-tubulin] + CoA + H(+). Its function is as follows. Specifically acetylates 'Lys-40' in alpha-tubulin on the lumenal side of microtubules. Promotes microtubule destabilization and accelerates microtubule dynamics; this activity may be independent of acetylation activity. Acetylates alpha-tubulin with a slow enzymatic rate, due to a catalytic site that is not optimized for acetyl transfer. Enters the microtubule through each end and diffuses quickly throughout the lumen of microtubules. Acetylates only long/old microtubules because of its slow acetylation rate since it does not have time to act on dynamically unstable microtubules before the enzyme is released. Required for normal sperm flagellar function. Promotes directional cell locomotion and chemotaxis, through AP2A2-dependent acetylation of alpha-tubulin at clathrin-coated pits that are concentrated at the leading edge of migrating cells. May facilitate primary cilium assembly. The sequence is that of Alpha-tubulin N-acetyltransferase 1 from Rattus norvegicus (Rat).